A 144-amino-acid chain; its full sequence is Large ribosomal subunit protein uL13 (144 aa).

This sequence belongs to the universal ribosomal protein uL13 family. As to quaternary structure, part of the 50S ribosomal subunit.

Its function is as follows. This protein is one of the early assembly proteins of the 50S ribosomal subunit, although it is not seen to bind rRNA by itself. It is important during the early stages of 50S assembly. The protein is Large ribosomal subunit protein uL13 of Mycoplasmopsis synoviae (strain 53) (Mycoplasma synoviae).